The chain runs to 229 residues: uncharacterized protein (229 aa).

In terms of domain architecture, HTH cro/C1-type spans 24-78 (LRKWRSIFNASQSDLARKLGISPSVISDYESGRRKPGTAFLKKFVCALIELDGER). Residues 35–54 (QSDLARKLGISPSVISDYES) constitute a DNA-binding region (H-T-H motif).

This is an uncharacterized protein from Archaeoglobus fulgidus (strain ATCC 49558 / DSM 4304 / JCM 9628 / NBRC 100126 / VC-16).